Here is a 470-residue protein sequence, read N- to C-terminus: Angiopoietin-related protein 6 (470 aa).

The first 20 residues, 1 to 20, serve as a signal peptide directing secretion; it reads MGKPWLRALQLLLLLGASWA. The N-linked (GlcNAc...) asparagine glycan is linked to Asn58. Residues 59 to 116 adopt a coiled-coil conformation; the sequence is ASELAALRMRVGRHEELLRELQRLAAADGAVAGEVRALRKESRGLSARLGQLRAQLQH. Asn145 carries an N-linked (GlcNAc...) (complex) asparagine glycan. The disordered stretch occupies residues 214 to 249; the sequence is SDTSRMLDPAPEPQRDQTQRQQEPMASPMPAGHPAV. The region spanning 251–469 is the Fibrinogen C-terminal domain; the sequence is TKPVGPWQDC…KAAMLIRPLK (219 aa). Disulfide bonds link Cys260-Cys287 and Cys410-Cys423.

The protein resides in the secreted. In terms of biological role, may play a role in the wound healing process. May promote epidermal proliferation, remodeling and regeneration. May promote the chemotactic activity of endothelial cells and induce neovascularization. May counteract high-fat diet-induced obesity and related insulin resistance through increased energy expenditure. In Homo sapiens (Human), this protein is Angiopoietin-related protein 6 (ANGPTL6).